The primary structure comprises 105 residues: MATLTQQKIRIRLKAYDHRLLDTSCDKIVDTARRTEAVPVGPIPLPTRRRLYCVLRSPHTDKDSREHFEVRTHRRIIDIYSPSSKTIDALMKLDLPAGVDIEVKL.

The protein belongs to the universal ribosomal protein uS10 family. In terms of assembly, part of the 30S ribosomal subunit.

Functionally, involved in the binding of tRNA to the ribosomes. This chain is Small ribosomal subunit protein uS10, found in Synechococcus sp. (strain JA-3-3Ab) (Cyanobacteria bacterium Yellowstone A-Prime).